The chain runs to 258 residues: Ribose-5-phosphate isomerase (258 aa).

Belongs to the ribose 5-phosphate isomerase family.

The protein resides in the cytoplasm. It carries out the reaction aldehydo-D-ribose 5-phosphate = D-ribulose 5-phosphate. It functions in the pathway carbohydrate degradation; pentose phosphate pathway; D-ribose 5-phosphate from D-ribulose 5-phosphate (non-oxidative stage): step 1/1. The protein is Ribose-5-phosphate isomerase (RKI1) of Saccharomyces cerevisiae (strain YJM789) (Baker's yeast).